A 265-amino-acid chain; its full sequence is Cytosolic Fe-S cluster assembly factor NUBP2 homolog (265 aa).

22–29 (GKGGVGKS) lines the ATP pocket. [4Fe-4S] cluster is bound by residues cysteine 196 and cysteine 199.

Belongs to the Mrp/NBP35 ATP-binding proteins family. NUBP2/CFD1 subfamily. As to quaternary structure, heterotetramer of 2 NUBP1 and 2 NUBP2 chains. It depends on [4Fe-4S] cluster as a cofactor.

The protein localises to the cytoplasm. Component of the cytosolic iron-sulfur (Fe/S) protein assembly (CIA) machinery. Required for maturation of extramitochondrial Fe-S proteins. The NUBP1-NUBP2 heterotetramer forms a Fe-S scaffold complex, mediating the de novo assembly of an Fe-S cluster and its transfer to target apoproteins. In Trichoplax adhaerens (Trichoplax reptans), this protein is Cytosolic Fe-S cluster assembly factor NUBP2 homolog.